Here is a 266-residue protein sequence, read N- to C-terminus: Interleukin-1 beta (266 aa).

The propeptide occupies 1–113 (MATVPEPINE…ETSSDEFLCD (113 aa)).

This sequence belongs to the IL-1 family. In terms of assembly, monomer. In its precursor form, weakly interacts with full-length MEFV; the mature cytokine does not interact at all. Interacts with integrins ITGAV:ITGBV and ITGA5:ITGB1; integrin-binding is required for IL1B signaling. Interacts with cargo receptor TMED10; the interaction is direct and is required for the secretion of IL1B mature form. Interacts with HSP90AB1; the interaction facilitates cargo translocation into the ERGIC. Interacts with HSP90B1; the interaction facilitates cargo translocation into the ERGIC.

Its subcellular location is the cytoplasm. The protein localises to the cytosol. It is found in the secreted. The protein resides in the lysosome. It localises to the extracellular exosome. Its function is as follows. Potent pro-inflammatory cytokine. Initially discovered as the major endogenous pyrogen, induces prostaglandin synthesis, neutrophil influx and activation, T-cell activation and cytokine production, B-cell activation and antibody production, and fibroblast proliferation and collagen production. Promotes Th17 differentiation of T-cells. Synergizes with IL12/interleukin-12 to induce IFNG synthesis from T-helper 1 (Th1) cells. Plays a role in angiogenesis by inducing VEGF production synergistically with TNF and IL6. Involved in transduction of inflammation downstream of pyroptosis: its mature form is specifically released in the extracellular milieu by passing through the gasdermin-D (GSDMD) pore. This is Interleukin-1 beta (IL1B) from Bubalus carabanensis (Swamp type water buffalo).